The primary structure comprises 337 residues: Heme A synthase (337 aa).

The next 5 helical transmembrane spans lie at 6–26, 87–107, 119–139, 154–174, and 192–212; these read ITKW…IGGI, FIHR…LIYF, LPYI…WYMV, LAFH…QLIK, and LIFS…GALV. H256 contacts heme. Transmembrane regions (helical) follow at residues 258-278, 285-305, and 308-328; these read LGSY…LTIE, IAYF…ITLL, and VPII…SIII. H316 contacts heme.

The protein belongs to the COX15/CtaA family. Type 2 subfamily. In terms of assembly, interacts with CtaB. The cofactor is heme b.

It is found in the cell membrane. It catalyses the reaction Fe(II)-heme o + 2 A + H2O = Fe(II)-heme a + 2 AH2. It participates in porphyrin-containing compound metabolism; heme A biosynthesis; heme A from heme O: step 1/1. Functionally, catalyzes the conversion of heme O to heme A by two successive hydroxylations of the methyl group at C8. The first hydroxylation forms heme I, the second hydroxylation results in an unstable dihydroxymethyl group, which spontaneously dehydrates, resulting in the formyl group of heme A. In Rickettsia akari (strain Hartford), this protein is Heme A synthase.